Here is a 91-residue protein sequence, read N- to C-terminus: ATP-dependent Clp protease adapter protein ClpS (91 aa).

The protein belongs to the ClpS family. Binds to the N-terminal domain of the chaperone ClpA.

Its function is as follows. Involved in the modulation of the specificity of the ClpAP-mediated ATP-dependent protein degradation. In Synechococcus sp. (strain ATCC 27144 / PCC 6301 / SAUG 1402/1) (Anacystis nidulans), this protein is ATP-dependent Clp protease adapter protein ClpS.